The primary structure comprises 217 residues: Probable transaldolase (217 aa).

The active-site Schiff-base intermediate with substrate is K84.

The protein belongs to the transaldolase family. Type 3B subfamily.

The protein resides in the cytoplasm. It carries out the reaction D-sedoheptulose 7-phosphate + D-glyceraldehyde 3-phosphate = D-erythrose 4-phosphate + beta-D-fructose 6-phosphate. It functions in the pathway carbohydrate degradation; pentose phosphate pathway; D-glyceraldehyde 3-phosphate and beta-D-fructose 6-phosphate from D-ribose 5-phosphate and D-xylulose 5-phosphate (non-oxidative stage): step 2/3. In terms of biological role, transaldolase is important for the balance of metabolites in the pentose-phosphate pathway. The sequence is that of Probable transaldolase from Roseiflexus castenholzii (strain DSM 13941 / HLO8).